The primary structure comprises 493 residues: 3-octaprenyl-4-hydroxybenzoate carboxy-lyase (493 aa).

Mn(2+) is bound at residue asparagine 172. Prenylated FMN-binding positions include 175 to 177 (IYR), 189 to 191 (RWL), and 194 to 195 (RG). Glutamate 238 serves as a coordination point for Mn(2+). Residue aspartate 287 is the Proton donor of the active site.

This sequence belongs to the UbiD family. As to quaternary structure, homohexamer. Requires prenylated FMN as cofactor. Mn(2+) serves as cofactor.

Its subcellular location is the cell membrane. The catalysed reaction is a 4-hydroxy-3-(all-trans-polyprenyl)benzoate + H(+) = a 2-(all-trans-polyprenyl)phenol + CO2. The protein operates within cofactor biosynthesis; ubiquinone biosynthesis. Functionally, catalyzes the decarboxylation of 3-octaprenyl-4-hydroxy benzoate to 2-octaprenylphenol, an intermediate step in ubiquinone biosynthesis. The chain is 3-octaprenyl-4-hydroxybenzoate carboxy-lyase from Shewanella baltica (strain OS195).